Reading from the N-terminus, the 110-residue chain is Acylphosphatase (110 aa).

Residues 20–108 (RAHIFVRGKV…GEFNDFSILP (89 aa)) enclose the Acylphosphatase-like domain. Residues R35 and N53 contribute to the active site.

This sequence belongs to the acylphosphatase family.

It catalyses the reaction an acyl phosphate + H2O = a carboxylate + phosphate + H(+). This is Acylphosphatase (acyP) from Pyrobaculum calidifontis (strain DSM 21063 / JCM 11548 / VA1).